Consider the following 928-residue polypeptide: DNA-binding protein RFX6 (928 aa).

2 disordered regions span residues 1-20 (MAKV…APQL) and 50-98 (EGQP…SKTK). Positions 124–199 (TLQWLEENYI…YHYYGIGIKE (76 aa)) form a DNA-binding region, RFX-type winged-helix.

It belongs to the RFX family. In terms of assembly, interacts with RFX3. Expressed in pancreas. Expressed in pancreatic beta-cells (insulin-positive cells) and alpha-cells (glucagon-positive cells) (at protein level). Specifically expressed in pancreas, small intestine and colon. Expressed in endocrine cells in the islets.

It is found in the nucleus. Functionally, transcription factor required to direct islet cell differentiation during endocrine pancreas development. Specifically required for the differentiation of 4 of the 5 islet cell types and for the production of insulin. Not required for pancreatic PP (polypeptide-producing) cells differentiation. Acts downstream of NEUROG3 and regulates the transcription factors involved in beta-cell maturation and function, thereby restricting the expression of the beta-cell differentiation and specification genes, and thus the beta-cell fate choice. Activates transcription by forming a heterodimer with RFX3 and binding to the X-box in the promoter of target genes. Involved in glucose-stimulated insulin secretion by promoting insulin and L-type calcium channel gene transcription. The protein is DNA-binding protein RFX6 (RFX6) of Homo sapiens (Human).